A 249-amino-acid chain; its full sequence is Triosephosphate isomerase (249 aa).

9 to 11 (NWK) lines the substrate pocket. H95 serves as the catalytic Electrophile. E166 acts as the Proton acceptor in catalysis. Substrate contacts are provided by residues G172, S211, and 232–233 (GG).

This sequence belongs to the triosephosphate isomerase family. Homodimer.

It localises to the cytoplasm. It carries out the reaction D-glyceraldehyde 3-phosphate = dihydroxyacetone phosphate. The protein operates within carbohydrate biosynthesis; gluconeogenesis. It functions in the pathway carbohydrate degradation; glycolysis; D-glyceraldehyde 3-phosphate from glycerone phosphate: step 1/1. Its function is as follows. Involved in the gluconeogenesis. Catalyzes stereospecifically the conversion of dihydroxyacetone phosphate (DHAP) to D-glyceraldehyde-3-phosphate (G3P). In Legionella pneumophila subsp. pneumophila (strain Philadelphia 1 / ATCC 33152 / DSM 7513), this protein is Triosephosphate isomerase.